The primary structure comprises 461 residues: Bacterial E1-like protein BilD (461 aa).

Cys385 acts as the Glycyl thioester intermediate in catalysis.

Functionally, component of the Bil (bacterial ISG15-like) antiviral defense system, composed of BilA, BilB, BilC and BilD. The Bil system specifically conjugates a ubiquitin-like moiety (bilA) to the bacteriophage central tail fiber (CTF, or tip attachment protein J) via reactions involving E1 (bilD) and E2 (bilB). Modifies CTF of phage SECphi27 and SECphi4, which probably interferes with assembly of the phage tail. Also modifies T5 baseplate hub protein pb3 (gene D16), but not gp27 of phage T6 (Bil defends against T6). BilD (E1) catalyzes the first step in conjugation. Activates ubiquitin-like BilA by first adenylating its C-terminal glycine residue with ATP, and then conjugates it to the side chain of a cysteine residue in E1 (this protein), yielding a ubiquitin-E1 thioester and free AMP. Bil-encoding bacteria produce mostly defective phage SECphi27, many of which have phage assembly defects, including no tails. SECphi27 phage progeny produced in E.coli with the Bil system inject less DNA into naive host cells, maybe because the phage are less able to adsorb and inject their DNA into host cells. Its function is as follows. Expression of the Bil system in E.coli (strain MG1655) confers about 100-fold resistance to phage SECphi27, SECphi18, SECphi6, SECphi4 and T5, but not to SECphi17. When cells expressing the Bil system are infected by phage SECphi27 at low multiplicity of infection (0.03 MOI) the culture survives, at 3.0 MOI the culture collapses at the same time as cells without the Bil system. In Collimonas sp. (strain OK412), this protein is Bacterial E1-like protein BilD.